A 399-amino-acid chain; its full sequence is Cell division protein FtsZ (399 aa).

Residues 30–34 (GGGSN), 117–119 (GTG), Glu148, Lys152, and Asp196 contribute to the GTP site. The disordered stretch occupies residues 349 to 368 (TLMSGNQNAPSGSYEQQDSS). Residues 351-368 (MSGNQNAPSGSYEQQDSS) show a composition bias toward polar residues.

Belongs to the FtsZ family. In terms of assembly, homodimer. Polymerizes to form a dynamic ring structure in a strictly GTP-dependent manner. Interacts directly with several other division proteins.

The protein localises to the cytoplasm. Functionally, essential cell division protein that forms a contractile ring structure (Z ring) at the future cell division site. The regulation of the ring assembly controls the timing and the location of cell division. One of the functions of the FtsZ ring is to recruit other cell division proteins to the septum to produce a new cell wall between the dividing cells. Binds GTP and shows GTPase activity. This Borreliella burgdorferi (strain ATCC 35210 / DSM 4680 / CIP 102532 / B31) (Borrelia burgdorferi) protein is Cell division protein FtsZ.